Here is a 319-residue protein sequence, read N- to C-terminus: MKTIAVLTSGGDAPGMNAAIRAVVRTGLDKGLKVMGIQRGYSGLINGEIFEMHRYSVADIIHRGGTILRTARCEEFKTEAGRKKGVNILKAFGIDGVVVIGGDGSFQGAQLLSKLGVKTIGIPGTIDNDLAYTDYTIGFDTATNTVLDAINKLRDTSSSHERVSIVEVMGRGCGDLALFAGIGGGAESVIVPEKEFNEDELCKTILEGKLRGKLHNLIILAEGVGGGEALTKKVQETTGIQTRLTTLGHLQRGGSPSAFDRILASRLGVKAVELLLEGKSSRVVGLRNNKVVDDDIDEALSMKSKFDDELYDIAKILSY.

Residue Gly11 participates in ATP binding. Residue Arg21–Arg25 participates in ADP binding. ATP-binding positions include Arg72 to Cys73 and Gly102 to Ser105. Asp103 is a Mg(2+) binding site. Thr125 to Asp127 contributes to the substrate binding site. The Proton acceptor role is filled by Asp127. Arg154 lines the ADP pocket. Substrate-binding positions include Arg162 and Met169–Arg171. Residues Gly185–Glu187, Arg211, and Lys213–His215 contribute to the ADP site. Residues Glu222, Arg243, and His249–Arg252 each bind substrate.

The protein belongs to the phosphofructokinase type A (PFKA) family. ATP-dependent PFK group I subfamily. Prokaryotic clade 'B1' sub-subfamily. Homotetramer. Requires Mg(2+) as cofactor.

It localises to the cytoplasm. The enzyme catalyses beta-D-fructose 6-phosphate + ATP = beta-D-fructose 1,6-bisphosphate + ADP + H(+). The protein operates within carbohydrate degradation; glycolysis; D-glyceraldehyde 3-phosphate and glycerone phosphate from D-glucose: step 3/4. With respect to regulation, allosterically activated by ADP and other diphosphonucleosides, and allosterically inhibited by phosphoenolpyruvate. In terms of biological role, catalyzes the phosphorylation of D-fructose 6-phosphate to fructose 1,6-bisphosphate by ATP, the first committing step of glycolysis. The protein is ATP-dependent 6-phosphofructokinase of Clostridium novyi (strain NT).